We begin with the raw amino-acid sequence, 92 residues long: Small ribosomal subunit protein uS19c (92 aa).

This sequence belongs to the universal ribosomal protein uS19 family.

It localises to the plastid. Its subcellular location is the chloroplast. Protein S19 forms a complex with S13 that binds strongly to the 16S ribosomal RNA. The sequence is that of Small ribosomal subunit protein uS19c from Tupiella akineta (Green alga).